The chain runs to 265 residues: Speedy protein E12 (265 aa).

The disordered stretch occupies residues 1 to 80; sequence MGQILGKIMM…EPEKELAPEP (80 aa). Residues 13 to 23 are compositionally biased toward low complexity; it reads QPQPQEEQSPQ. A compositionally biased stretch (acidic residues) spans 66–80; that stretch reads DESDDEPEKELAPEP.

The protein belongs to the Speedy/Ringo family.

The protein is Speedy protein E12 of Homo sapiens (Human).